The chain runs to 335 residues: NADH-quinone oxidoreductase subunit H (335 aa).

8 consecutive transmembrane segments (helical) span residues 11–31 (VIISVVKAIVILLAVVVAGAL), 81–101 (VIFTLAPVVAMSALLIAFAVI), 114–134 (IGLLFFFAMAGLSVYAVLFAG), 154–174 (VSYEVFMGLALMGIVVQVGSF), 187–207 (LWFIIPQFFGFCTFFIAGVAV), 238–258 (FFVGEYIGIILISALLVTLFF), 270–290 (QLAFFWFFLKTAFFIMLFILL), and 309–329 (FCLPLTLINLLVTAAVVLLNT).

Belongs to the complex I subunit 1 family. As to quaternary structure, NDH-1 is composed of 13 different subunits. Subunits NuoA, H, J, K, L, M, N constitute the membrane sector of the complex.

It is found in the cell inner membrane. The enzyme catalyses a quinone + NADH + 5 H(+)(in) = a quinol + NAD(+) + 4 H(+)(out). NDH-1 shuttles electrons from NADH, via FMN and iron-sulfur (Fe-S) centers, to quinones in the respiratory chain. The immediate electron acceptor for the enzyme in this species is believed to be ubiquinone. Couples the redox reaction to proton translocation (for every two electrons transferred, four hydrogen ions are translocated across the cytoplasmic membrane), and thus conserves the redox energy in a proton gradient. This subunit may bind ubiquinone. This is NADH-quinone oxidoreductase subunit H from Pseudomonas fluorescens (strain SBW25).